The following is a 59-amino-acid chain: Large ribosomal subunit protein bL33 (59 aa).

Belongs to the bacterial ribosomal protein bL33 family.

This is Large ribosomal subunit protein bL33 from Borrelia turicatae (strain 91E135).